The following is a 517-amino-acid chain: GMP synthase [glutamine-hydrolyzing] (517 aa).

One can recognise a Glutamine amidotransferase type-1 domain in the interval 9–199 (RILILDFGSQ…VLNVCGCEGL (191 aa)). Cys86 acts as the Nucleophile in catalysis. Residues His173 and Glu175 contribute to the active site. Positions 200–392 (WTSASIIEDA…LGLPYNMLYR (193 aa)) constitute a GMPS ATP-PPase domain. Residue 227-233 (SGGVDSS) participates in ATP binding.

As to quaternary structure, homodimer.

It catalyses the reaction XMP + L-glutamine + ATP + H2O = GMP + L-glutamate + AMP + diphosphate + 2 H(+). It functions in the pathway purine metabolism; GMP biosynthesis; GMP from XMP (L-Gln route): step 1/1. Catalyzes the synthesis of GMP from XMP. This is GMP synthase [glutamine-hydrolyzing] from Aliivibrio fischeri (strain MJ11) (Vibrio fischeri).